A 132-amino-acid polypeptide reads, in one-letter code: Large-conductance mechanosensitive channel (132 aa).

Transmembrane regions (helical) follow at residues 14-34 (VVDLAVGVVIGAAFGKIVSSL), 38-58 (IITPLLGMVLGGVDFTSLHFG), and 67-87 (GNFIQTIFDFLIIAASIFMFV).

Belongs to the MscL family. As to quaternary structure, homopentamer.

Its subcellular location is the cell membrane. In terms of biological role, channel that opens in response to stretch forces in the membrane lipid bilayer. May participate in the regulation of osmotic pressure changes within the cell. In Bacillus cereus (strain B4264), this protein is Large-conductance mechanosensitive channel.